We begin with the raw amino-acid sequence, 179 residues long: Coiled-coil domain-containing protein 32 (179 aa).

A coiled-coil region spans residues 75–98 (EVYLASLEKKLRRIKGLNEEVTSK). The segment at 157–179 (FLIPPESQAEKPEARDEPAAAEQ) is disordered. Positions 164–179 (QAEKPEARDEPAAAEQ) are enriched in basic and acidic residues.

In terms of assembly, interacts with AP2S1; the interaction is direct and mediates association with adaptor protein complex 2 (AP-2).

The protein localises to the membrane. The protein resides in the coated pit. Functionally, regulates clathrin-mediated endocytsois of cargos such as transferrin probably through the association and modulation of adaptor protein complex 2 (AP-2). Has a role in ciliogenesis. Required for proper cephalic and left/right axis development. The polypeptide is Coiled-coil domain-containing protein 32 (Ccdc32) (Rattus norvegicus (Rat)).